Here is a 396-residue protein sequence, read N- to C-terminus: Purine ribonucleoside efflux pump NepI (396 aa).

Over 1 to 21 the chain is Cytoplasmic; that stretch reads MSEFIAENRGANAITRPNWSA. Residues 22-42 traverse the membrane as a helical segment; sequence VFSVAFCVACLIIVEFLPVSL. At 43 to 54 the chain is on the periplasmic side; it reads LTPMAQDLGISE. A helical membrane pass occupies residues 55 to 75; it reads GVAGQSVTVTAFVAMFASLFI. The Cytoplasmic portion of the chain corresponds to 76–85; it reads TQTIQATDRR. A helical membrane pass occupies residues 86-106; sequence YVVILFAVLLTLSCLLVSFAN. Position 107 (Ser107) is a topological domain, periplasmic. Residues 108–128 traverse the membrane as a helical segment; the sequence is FSLLLIGRACLGVALGGFWAI. The Cytoplasmic segment spans residues 129–147; that stretch reads SASLTMRLVPPRTVPKALS. Residues 148–168 traverse the membrane as a helical segment; it reads VIFGAVSIALVIAAPLGSFLG. At 169-175 the chain is on the periplasmic side; it reads ELIGWRN. The helical transmembrane segment at 176-196 threads the bilayer; sequence VFNAAAAMGVLCIFWIIKSLP. Residues 197 to 215 lie on the Cytoplasmic side of the membrane; it reads SLPGEPSHQKQNTFRLLQR. Residues 216-236 traverse the membrane as a helical segment; it reads PGVMAGMIAIFMSFAGQFAFF. Residues 237-255 lie on the Periplasmic side of the membrane; sequence TYIRPVYMNLAGFGVDGLT. The chain crosses the membrane as a helical span at residues 256 to 276; that stretch reads LVLLSFGIASFVGTSLSSFIL. Residues 277-281 lie on the Cytoplasmic side of the membrane; it reads KRSVK. A helical membrane pass occupies residues 282–302; it reads LALAGAPFVLALSALVLTLWG. Over 303 to 305 the chain is Periplasmic; it reads SDK. Residues 306-326 traverse the membrane as a helical segment; the sequence is IVATGVAIIWGLTFALIPVGW. The Cytoplasmic segment spans residues 327 to 343; the sequence is STWITRSLADQAEKAGS. The chain crosses the membrane as a helical span at residues 344–364; the sequence is IQVAVIQLANTCGAAIGGYAL. Over 365-366 the chain is Periplasmic; the sequence is DN. The helical transmembrane segment at 367–387 threads the bilayer; the sequence is IGLTSPLMLSGTLMLLTALLV. At 388 to 396 the chain is on the cytoplasmic side; that stretch reads TAKVKMKKS.

It belongs to the major facilitator superfamily. DHA1 family. NepI (TC 2.A.1.2.26) subfamily.

The protein resides in the cell inner membrane. It catalyses the reaction inosine(in) + H(+)(out) = inosine(out) + H(+)(in). The enzyme catalyses guanosine(in) + H(+)(out) = guanosine(out) + H(+)(in). Its function is as follows. Involved in the efflux of purine ribonucleosides, such as inosine and guanosine. This chain is Purine ribonucleoside efflux pump NepI, found in Escherichia coli O6:K15:H31 (strain 536 / UPEC).